The chain runs to 243 residues: Histone H2B.2 (243 aa).

Ala2 is subject to N,N,N-trimethylalanine; alternate. Ala2 is subject to N,N-dimethylalanine; alternate. Ala2 carries the N-methylalanine; alternate modification. The interval 67-145 (PDERSLPVGE…KKKKKKKRDD (79 aa)) is disordered. Positions 120-132 (GTLKKTDKVEKKQ) are enriched in basic and acidic residues. Residues 133–142 (ENKKKKKKKK) show a composition bias toward basic residues.

It belongs to the histone H2B family. As to quaternary structure, the nucleosome is a histone octamer containing two molecules each of H2A, H2B, H3 and H4 assembled in one H3-H4 heterotetramer and two H2A-H2B heterodimers. The octamer wraps approximately 147 bp of DNA. Post-translationally, can be acetylated to form H2BK6ac.

It is found in the nucleus. It localises to the chromosome. In terms of biological role, core component of nucleosome. Nucleosomes wrap and compact DNA into chromatin, limiting DNA accessibility to the cellular machineries which require DNA as a template. Histones thereby play a central role in transcription regulation, DNA repair, DNA replication and chromosomal stability. DNA accessibility is regulated via a complex set of post-translational modifications of histones, also called histone code, and nucleosome remodeling. The protein is Histone H2B.2 of Arabidopsis thaliana (Mouse-ear cress).